Reading from the N-terminus, the 379-residue chain is Lipoyl synthase, mitochondrial (379 aa).

Residues Cys94, Cys99, Cys105, Cys126, Cys130, Cys133, and Ser342 each contribute to the [4Fe-4S] cluster site. The Radical SAM core domain occupies Gly109–Leu331.

It belongs to the radical SAM superfamily. Lipoyl synthase family. The cofactor is [4Fe-4S] cluster.

It localises to the mitochondrion. The catalysed reaction is [[Fe-S] cluster scaffold protein carrying a second [4Fe-4S](2+) cluster] + N(6)-octanoyl-L-lysyl-[protein] + 2 oxidized [2Fe-2S]-[ferredoxin] + 2 S-adenosyl-L-methionine + 4 H(+) = [[Fe-S] cluster scaffold protein] + N(6)-[(R)-dihydrolipoyl]-L-lysyl-[protein] + 4 Fe(3+) + 2 hydrogen sulfide + 2 5'-deoxyadenosine + 2 L-methionine + 2 reduced [2Fe-2S]-[ferredoxin]. The protein operates within protein modification; protein lipoylation via endogenous pathway; protein N(6)-(lipoyl)lysine from octanoyl-[acyl-carrier-protein]: step 2/2. Catalyzes the radical-mediated insertion of two sulfur atoms into the C-6 and C-8 positions of the octanoyl moiety bound to the lipoyl domains of lipoate-dependent enzymes, thereby converting the octanoylated domains into lipoylated derivatives. In Leishmania braziliensis, this protein is Lipoyl synthase, mitochondrial.